The following is a 728-amino-acid chain: Golgin subfamily A member 5 (728 aa).

At serine 2 the chain carries N-acetylserine. Over 2 to 695 (SWFADLAGRA…IFLRRYPIAR (694 aa)) the chain is Cytoplasmic. Arginine 27 and arginine 89 each carry dimethylated arginine. The tract at residues 88-202 (SRTGGDASHP…KKSTEESTVS (115 aa)) is disordered. Residue serine 116 is modified to Phosphoserine. Residues 134–146 (PTGRVEIKKEKGK) show a composition bias toward basic and acidic residues. Residues 152 to 167 (SSQSSAVSSVTTSVTT) are compositionally biased toward low complexity. Positions 173 to 187 (ENSGSQSPEVSSSDS) are enriched in polar residues. A coiled-coil region spans residues 216 to 628 (GSMSHELSNL…LEQQLHSAAT (413 aa)). Residues 696–716 (VFVIIYMALLHLWVMIVLLTY) form a helical; Anchor for type IV membrane protein membrane-spanning segment. The Lumenal segment spans residues 717-728 (SPEMHHDQPYGK).

In terms of assembly, homodimer. Interacts with RAB1A that has been activated by GTP-binding. Interacts with isoform CASP of CUX1. In terms of processing, highly phosphorylated during mitosis. Phosphorylation is barely detectable during interphase.

Its subcellular location is the golgi apparatus membrane. Functionally, involved in maintaining Golgi structure. Stimulates the formation of Golgi stacks and ribbons. Involved in intra-Golgi retrograde transport. This chain is Golgin subfamily A member 5 (Golga5), found in Rattus norvegicus (Rat).